The primary structure comprises 445 residues: 6-phosphogluconate dehydrogenase, decarboxylating (445 aa).

NADP(+) contacts are provided by residues 1 to 4, 22 to 24, 63 to 65, and N91; these read AVMG, NRS, and VKA. Substrate is bound by residues N91 and 117-119; that span reads SGG. K172 (proton acceptor) is an active-site residue. Residue 175-176 coordinates substrate; that stretch reads HN. E179 serves as the catalytic Proton donor. The substrate site is built by Y180, K249, R276, R434, and H440.

This sequence belongs to the 6-phosphogluconate dehydrogenase family. Homodimer.

The catalysed reaction is 6-phospho-D-gluconate + NADP(+) = D-ribulose 5-phosphate + CO2 + NADPH. It functions in the pathway carbohydrate degradation; pentose phosphate pathway; D-ribulose 5-phosphate from D-glucose 6-phosphate (oxidative stage): step 3/3. Its function is as follows. Catalyzes the oxidative decarboxylation of 6-phosphogluconate to ribulose 5-phosphate and CO(2), with concomitant reduction of NADP to NADPH. The chain is 6-phosphogluconate dehydrogenase, decarboxylating (gnd) from Shigella boydii.